We begin with the raw amino-acid sequence, 111 residues long: Large ribosomal subunit protein eL33z (111 aa).

Belongs to the eukaryotic ribosomal protein eL33 family.

This Arabidopsis thaliana (Mouse-ear cress) protein is Large ribosomal subunit protein eL33z (RPL35AB).